The chain runs to 1002 residues: Calmin (1002 aa).

An actin-binding region spans residues 1–288; that stretch reads MAAHEWDWFQ…IMTYVAQFLE (288 aa). Residues 32–139 enclose the Calponin-homology (CH) 1 domain; the sequence is NVQKRTFTRW…LIWNIILFFQ (108 aa). The segment covering 149–168 has biased composition (low complexity); the sequence is RNSPSSSLSPGSGGTDSDSS. The interval 149–180 is disordered; sequence RNSPSSSLSPGSGGTDSDSSFPPTPTAERSVA. The region spanning 187 to 291 is the Calponin-homology (CH) 2 domain; it reads RKAIKALLAW…YVAQFLERFP (105 aa). Phosphoserine is present on residues Ser-301 and Ser-402. Disordered stretches follow at residues 389–418, 500–532, 581–716, and 749–911; these read QGGPGKTSDISEPSPESSILSSRKENGRSN, NNNSQSSSCNGALESTARHDEESHSLSPPGENT, NKVP…SPPL, and DLKN…DSSI. Residues 396–409 are compositionally biased toward low complexity; it reads SDISEPSPESSILS. The span at 500–509 shows a compositional bias: polar residues; the sequence is NNNSQSSSCN. Over residues 585–606 the composition is skewed to basic and acidic residues; sequence SPHETKPDEDAEAFENHAEKLG. Residues 607-617 show a composition bias toward basic residues; that stretch reads KRSIKSAHKKK. Basic and acidic residues-rich tracts occupy residues 618-635 and 650-659; these read DSPEPQVKMDKHEPHQDS and PVDKKPEVHE. Phosphoserine is present on Ser-619. Residues 681–697 show a composition bias toward low complexity; that stretch reads GVGEELSSSPPSSCVSL. Thr-699 bears the Phosphothreonine mark. Ser-713 and Ser-769 each carry phosphoserine. Residues 776–794 are compositionally biased toward low complexity; sequence GSQSSSSSSVPGESLPSAS. Residues 818-834 show a composition bias toward basic and acidic residues; it reads PHEDHQQRETKENDPMD. The span at 835 to 846 shows a compositional bias: polar residues; sequence SHQSQESPNLEN. Phosphoserine is present on residues Ser-838 and Ser-841. A compositionally biased stretch (basic and acidic residues) spans 854–863; sequence NVTKESISSK. The segment covering 898–910 has biased composition (polar residues); it reads YSIPSRTSHSDSS. Ser-907 bears the Phosphoserine mark. Residues 977–997 traverse the membrane as a helical; Anchor for type IV membrane protein segment; sequence MMYFILFLWLLVYCLLLFPQL.

As to expression, widely expressed at intermediate level.

It localises to the membrane. The polypeptide is Calmin (CLMN) (Homo sapiens (Human)).